The sequence spans 393 residues: Peptidyl-prolyl cis-trans isomerase CYP7 (393 aa).

In terms of domain architecture, PPIase cyclophilin-type spans tyrosine 8–valine 196. TPR repeat units lie at residues alanine 240–tyrosine 273, methionine 292–proline 325, and alanine 330–aspartate 363.

Interacts with RPD3 and CNS1.

The enzyme catalyses [protein]-peptidylproline (omega=180) = [protein]-peptidylproline (omega=0). Its function is as follows. PPIases accelerate the folding of proteins. It catalyzes the cis-trans isomerization of proline imidic peptide bonds in oligopeptides. Plays a major role in negative regulation of the heat shock transcription factor (HSF). The chain is Peptidyl-prolyl cis-trans isomerase CYP7 (CPR7) from Saccharomyces cerevisiae (strain ATCC 204508 / S288c) (Baker's yeast).